The sequence spans 153 residues: Large ribosomal subunit protein uL22 (153 aa).

The protein belongs to the universal ribosomal protein uL22 family. In terms of assembly, part of the 50S ribosomal subunit.

This protein binds specifically to 23S rRNA. It makes multiple contacts with different domains of the 23S rRNA in the assembled 50S subunit and ribosome. Its function is as follows. The globular domain of the protein is located near the polypeptide exit tunnel on the outside of the subunit, while an extended beta-hairpin is found that lines the wall of the exit tunnel in the center of the 70S ribosome. The protein is Large ribosomal subunit protein uL22 of Methanococcus vannielii (strain ATCC 35089 / DSM 1224 / JCM 13029 / OCM 148 / SB).